Here is a 313-residue protein sequence, read N- to C-terminus: RHOMBOID-like protein 7 (313 aa).

The span at 1 to 11 (MLSTAAEEDPE) shows a compositional bias: acidic residues. The tract at residues 1-24 (MLSTAAEEDPEGGSRETNNGGETT) is disordered. Residues 15–24 (RETNNGGETT) show a composition bias toward polar residues. Transmembrane regions (helical) follow at residues 31–51 (SWIIPIVVIANVVVFVVVMYY), 112–132 (WLHAGVIHLLANMCCVAYIGV), 143–163 (VGTIYLVSGFCGSILSCLFLE), 166–186 (ISVGASSALFGLLGAMLSELL), 196–216 (GVAIVMLLVIVGVNLGLGTLP), 221–241 (FAHIGGFFGGFLLGFLLLIHP), and 269–289 (LCIVASIVFVAGFTSGLVILF). The active-site Nucleophile is Ser-171. His-223 acts as the Charge relay system in catalysis.

This sequence belongs to the peptidase S54 family.

Its subcellular location is the membrane. The enzyme catalyses Cleaves type-1 transmembrane domains using a catalytic dyad composed of serine and histidine that are contributed by different transmembrane domains.. Probable rhomboid-type serine protease that catalyzes intramembrane proteolysis. May function in embryo development. In Arabidopsis thaliana (Mouse-ear cress), this protein is RHOMBOID-like protein 7.